A 615-amino-acid polypeptide reads, in one-letter code: Medium-chain acyl-CoA ligase ACSF2, mitochondrial (615 aa).

The transit peptide at 1-41 (MAVYVGMLRLGRLCAGSSGVLGARVALSRSWQEARLQGVRF) directs the protein to the mitochondrion. Position 179 is an N6-acetyllysine (Lys179). An N6-acetyllysine; alternate modification is found at Lys182. Lys182 is subject to N6-succinyllysine; alternate. Position 263–271 (263–271 (TSGTTGSPK)) interacts with ATP. N6-acetyllysine occurs at positions 340 and 398. Lys478 carries the post-translational modification N6-succinyllysine. 2 residues coordinate ATP: Asp493 and Arg508. Residue Lys510 is modified to N6-acetyllysine. N6-acetyllysine; alternate is present on residues Lys544 and Lys570. An N6-succinyllysine; alternate mark is found at Lys544 and Lys570. Residue Lys599 coordinates ATP. An N6-succinyllysine modification is found at Lys599.

Belongs to the ATP-dependent AMP-binding enzyme family.

It localises to the mitochondrion. The catalysed reaction is a medium-chain fatty acid + ATP + CoA = a medium-chain fatty acyl-CoA + AMP + diphosphate. It carries out the reaction octanoate + ATP + CoA = octanoyl-CoA + AMP + diphosphate. Its function is as follows. Acyl-CoA synthases catalyze the initial reaction in fatty acid metabolism, by forming a thioester with CoA. Has some preference toward medium-chain substrates. Plays a role in adipocyte differentiation. The chain is Medium-chain acyl-CoA ligase ACSF2, mitochondrial from Pongo abelii (Sumatran orangutan).